A 187-amino-acid chain; its full sequence is Chromophore lyase CpcS/CpeS 2 (187 aa).

This sequence belongs to the CpcS/CpeS biliprotein lyase family.

In terms of biological role, covalently attaches a chromophore to Cys residue(s) of phycobiliproteins. In Synechococcus sp. (strain JA-3-3Ab) (Cyanobacteria bacterium Yellowstone A-Prime), this protein is Chromophore lyase CpcS/CpeS 2.